Consider the following 302-residue polypeptide: Nodulation protein D 3 (302 aa).

The HTH lysR-type domain maps to 6 to 63 (LDLNLLVALDALMIERNLTAAARSINLSQPAMSAAVRRLRSYFRDELFTMRGREFVPT). Residues 23-42 (LTAAARSINLSQPAMSAAVR) constitute a DNA-binding region (H-T-H motif).

The protein belongs to the LysR transcriptional regulatory family.

NodD regulates the expression of the nodABCFE genes which encode other nodulation proteins. NodD is also a negative regulator of its own expression. Binds flavonoids as inducers. This chain is Nodulation protein D 3 (nodD3), found in Rhizobium leguminosarum bv. phaseoli.